The chain runs to 279 residues: Tryptophan synthase alpha chain (279 aa).

Catalysis depends on proton acceptor residues Glu-50 and Asp-61.

The protein belongs to the TrpA family. In terms of assembly, tetramer of two alpha and two beta chains.

It carries out the reaction (1S,2R)-1-C-(indol-3-yl)glycerol 3-phosphate + L-serine = D-glyceraldehyde 3-phosphate + L-tryptophan + H2O. It participates in amino-acid biosynthesis; L-tryptophan biosynthesis; L-tryptophan from chorismate: step 5/5. The alpha subunit is responsible for the aldol cleavage of indoleglycerol phosphate to indole and glyceraldehyde 3-phosphate. In Rhizobium rhizogenes (strain K84 / ATCC BAA-868) (Agrobacterium radiobacter), this protein is Tryptophan synthase alpha chain.